We begin with the raw amino-acid sequence, 110 residues long: Putative anti-sigma factor antagonist TM_1442 (110 aa).

The 107-residue stretch at 4–110 folds into the STAS domain; sequence LKLDIVEQDD…FKITDTVEEA (107 aa). Ser59 is modified (phosphoserine).

Belongs to the anti-sigma-factor antagonist family. Post-translationally, phosphorylated on a serine residue.

In terms of biological role, in the phosphorylated form it could act as an anti-anti-sigma factor that counteracts an anti-sigma factor and thus releases a sigma factor from inhibition. In Thermotoga maritima (strain ATCC 43589 / DSM 3109 / JCM 10099 / NBRC 100826 / MSB8), this protein is Putative anti-sigma factor antagonist TM_1442.